A 292-amino-acid chain; its full sequence is GTP cyclohydrolase FolE2 (292 aa).

This sequence belongs to the GTP cyclohydrolase IV family.

The enzyme catalyses GTP + H2O = 7,8-dihydroneopterin 3'-triphosphate + formate + H(+). Its pathway is cofactor biosynthesis; 7,8-dihydroneopterin triphosphate biosynthesis; 7,8-dihydroneopterin triphosphate from GTP: step 1/1. In terms of biological role, converts GTP to 7,8-dihydroneopterin triphosphate. The protein is GTP cyclohydrolase FolE2 of Macrococcus caseolyticus (strain JCSC5402) (Macrococcoides caseolyticum).